Here is a 321-residue protein sequence, read N- to C-terminus: Lipoyl synthase (321 aa).

The [4Fe-4S] cluster site is built by C68, C73, C79, C94, C98, C101, and S308. Residues 80 to 297 (FNHGTATFMI…KAEAMAMGFT (218 aa)) form the Radical SAM core domain.

This sequence belongs to the radical SAM superfamily. Lipoyl synthase family. It depends on [4Fe-4S] cluster as a cofactor.

The protein localises to the cytoplasm. It catalyses the reaction [[Fe-S] cluster scaffold protein carrying a second [4Fe-4S](2+) cluster] + N(6)-octanoyl-L-lysyl-[protein] + 2 oxidized [2Fe-2S]-[ferredoxin] + 2 S-adenosyl-L-methionine + 4 H(+) = [[Fe-S] cluster scaffold protein] + N(6)-[(R)-dihydrolipoyl]-L-lysyl-[protein] + 4 Fe(3+) + 2 hydrogen sulfide + 2 5'-deoxyadenosine + 2 L-methionine + 2 reduced [2Fe-2S]-[ferredoxin]. It functions in the pathway protein modification; protein lipoylation via endogenous pathway; protein N(6)-(lipoyl)lysine from octanoyl-[acyl-carrier-protein]: step 2/2. In terms of biological role, catalyzes the radical-mediated insertion of two sulfur atoms into the C-6 and C-8 positions of the octanoyl moiety bound to the lipoyl domains of lipoate-dependent enzymes, thereby converting the octanoylated domains into lipoylated derivatives. In Pectobacterium atrosepticum (strain SCRI 1043 / ATCC BAA-672) (Erwinia carotovora subsp. atroseptica), this protein is Lipoyl synthase.